Here is a 198-residue protein sequence, read N- to C-terminus: Riboflavin synthase (198 aa).

2 Lumazine-binding repeats span residues 1–95 (MFSG…IGGH) and 96–188 (FVSG…VDTV). 2,4-dihydroxypteridine-binding positions include 4–6 (GII), 46–48 (CLT), 60–65 (DVTEET), 99–101 (GHV), Lys-130, 139–141 (SLT), and 153–158 (SVIPET).

As to quaternary structure, homotrimer.

It carries out the reaction 2 6,7-dimethyl-8-(1-D-ribityl)lumazine + H(+) = 5-amino-6-(D-ribitylamino)uracil + riboflavin. Its pathway is cofactor biosynthesis; riboflavin biosynthesis; riboflavin from 2-hydroxy-3-oxobutyl phosphate and 5-amino-6-(D-ribitylamino)uracil: step 2/2. Catalyzes the dismutation of two molecules of 6,7-dimethyl-8-ribityllumazine, resulting in the formation of riboflavin and 5-amino-6-(D-ribitylamino)uracil. This chain is Riboflavin synthase (ribE), found in Chlamydia muridarum (strain MoPn / Nigg).